The primary structure comprises 1048 residues: Platelet-derived growth factor receptor beta (1048 aa).

Residues 1–30 form the signal peptide; that stretch reads MLRASAMRAAVLHLTVALAALLSSCTTVSC. Over 31-528 the chain is Extracellular; sequence LKIVPEEKQL…LVSSSLFSQV (498 aa). The Ig-like C2-type 1 domain occupies 35-124; the sequence is PEEKQLILAE…EIKEVAVFVP (90 aa). 2 disulfides stabilise this stretch: Cys52–Cys108 and Cys153–Cys194. 4 N-linked (GlcNAc...) asparagine glycosylation sites follow: Asn87, Asn159, Asn224, and Asn239. Ig-like C2-type domains lie at 216–309 and 319–406; these read PEDI…ASVN and AVKS…KEVT. Cys240 and Cys293 are oxidised to a cystine. Residues Asn309, Asn327, and Asn457 are each glycosylated (N-linked (GlcNAc...) asparagine). Cys434 and Cys503 are oxidised to a cystine. A helical membrane pass occupies residues 529 to 549; the sequence is VLLAVVLTLVPIIIMSIIILI. Residues 550 to 1048 lie on the Cytoplasmic side of the membrane; sequence AVWKKKPRYE…PIPDPKPEKS (499 aa). A phosphotyrosine; by autocatalysis mark is found at Tyr558, Tyr575, and Tyr577. The Protein kinase domain occupies 596-957; it reads LVLGRTLGSG…FLVHCVGDML (362 aa). Residues 602 to 610 and Lys630 contribute to the ATP site; that span reads LGSGAFGRV. Phosphotyrosine; by autocatalysis occurs at positions 735, 746, 758, 766, and 770. The Proton acceptor role is filled by Asp821. A phosphotyrosine; by autocatalysis mark is found at Tyr852 and Tyr1036.

Belongs to the protein kinase superfamily. Tyr protein kinase family. CSF-1/PDGF receptor subfamily. As to quaternary structure, interacts with homodimeric PDGFB and PDGFD, and with heterodimers formed by PDGFA and PDGFB. Monomer in the absence of bound ligand. Interaction with homodimeric PDGFB, heterodimers formed by PDGFA and PDGFB or homodimeric PDGFD, leads to receptor dimerization, where both PDGFRA homodimers and heterodimers with PDGFRB are observed. Post-translationally, ubiquitinated. After autophosphorylation, the receptor is polyubiquitinated, leading to its degradation. Autophosphorylated on tyrosine residues upon ligand binding. Autophosphorylation occurs in trans, i.e. one subunit of the dimeric receptor phosphorylates tyrosine residues on the other subunit.

It is found in the cell membrane. Its subcellular location is the cytoplasmic vesicle. It localises to the lysosome lumen. The enzyme catalyses L-tyrosyl-[protein] + ATP = O-phospho-L-tyrosyl-[protein] + ADP + H(+). Present in an inactive conformation in the absence of bound ligand. Binding of PDGFB and/or PDGFD leads to dimerization and activation by autophosphorylation on tyrosine residues. Tyrosine-protein kinase that acts as a cell-surface receptor for homodimeric PDGFB and PDGFD and for heterodimers formed by PDGFA and PDGFB, and plays an essential role in the regulation of embryonic development, cell proliferation, survival, differentiation, chemotaxis and migration. Plays an essential role in blood vessel development by promoting proliferation, migration and recruitment of pericytes and smooth muscle cells to endothelial cells. Required for normal development of the cardiovascular system. Required for normal recruitment of pericytes (mesangial cells) in the kidney glomerulus, and for normal formation of a branched network of capillaries in kidney glomeruli. Promotes rearrangement of the actin cytoskeleton and the formation of membrane ruffles. Binding of its cognate ligands - homodimeric PDGFB, heterodimers formed by PDGFA and PDGFB or homodimeric PDGFD -leads to the activation of several signaling cascades; the response depends on the nature of the bound ligand and is modulated by the formation of heterodimers between PDGFRA and PDGFRB. Receptor signaling is down-regulated by protein phosphatases that dephosphorylate the receptor and its down-stream effectors, and by rapid internalization of the activated receptor. The polypeptide is Platelet-derived growth factor receptor beta (pdgfrb) (Takifugu rubripes (Japanese pufferfish)).